The sequence spans 85 residues: RNA-binding protein Hfq (85 aa).

The 61-residue stretch at 11–71 (DTFLNHVRKS…ISTIMPGHPV (61 aa)) folds into the Sm domain.

This sequence belongs to the Hfq family. As to quaternary structure, homohexamer.

Functionally, RNA chaperone that binds small regulatory RNA (sRNAs) and mRNAs to facilitate mRNA translational regulation in response to envelope stress, environmental stress and changes in metabolite concentrations. Also binds with high specificity to tRNAs. Seems to be involved in the regulation of NifA. This chain is RNA-binding protein Hfq, found in Azorhizobium caulinodans (strain ATCC 43989 / DSM 5975 / JCM 20966 / LMG 6465 / NBRC 14845 / NCIMB 13405 / ORS 571).